A 234-amino-acid chain; its full sequence is Uridylate kinase (234 aa).

ATP is bound at residue 9 to 12 (KLSG). UMP is bound at residue Gly-51. Residues Gly-52 and Arg-56 each coordinate ATP. UMP is bound by residues Asp-71 and 132–139 (CGNPFFTT). 3 residues coordinate ATP: Thr-159, Tyr-165, and Asp-168.

The protein belongs to the UMP kinase family. In terms of assembly, homohexamer.

The protein resides in the cytoplasm. It carries out the reaction UMP + ATP = UDP + ADP. The protein operates within pyrimidine metabolism; CTP biosynthesis via de novo pathway; UDP from UMP (UMPK route): step 1/1. With respect to regulation, inhibited by UTP. Catalyzes the reversible phosphorylation of UMP to UDP. The sequence is that of Uridylate kinase from Prochlorococcus marinus (strain MIT 9515).